Here is a 1360-residue protein sequence, read N- to C-terminus: TRAF2 and NCK-interacting protein kinase (1360 aa).

Residues 25 to 289 form the Protein kinase domain; it reads FELVELVGNG…TEQLMKHPFI (265 aa). ATP contacts are provided by residues 31–39 and Lys54; that span reads VGNGTYGQV. Asp153 functions as the Proton acceptor in the catalytic mechanism. Thr187 carries the post-translational modification Phosphothreonine. Disordered stretches follow at residues 284 to 347, 398 to 440, and 539 to 589; these read MKHP…LPGE, QKEQ…RRRA, and ERSR…RPVD. Residues 288–307 show a composition bias toward basic and acidic residues; that stretch reads FIRDQPNERQVRIQLKDHID. The interval 290-1047 is mediates interaction with NEDD4; it reads RDQPNERQVR…EIRKYKKRFN (758 aa). Over residues 317–335 the composition is skewed to acidic residues; it reads DETEYEYSGSEEEEEENDS. Phosphoserine is present on residues Ser324 and Ser326. Phosphoserine is present on residues Ser560 and Ser570. The residue at position 581 (Thr581) is a Phosphothreonine. Ser600, Ser608, Ser610, and Ser640 each carry phosphoserine. 4 disordered regions span residues 601 to 801, 814 to 878, 908 to 927, and 933 to 998; these read QGPA…KAID, LRIE…YNVG, TSGEKKRSGHSDSNGFAGHI, and VQQS…ESSA. Positions 652–669 are enriched in basic and acidic residues; sequence RIEKFDRSSWLRQEEDIP. 9 positions are modified to phosphoserine: Ser678, Ser680, Ser688, Ser701, Ser707, Ser720, Ser764, Ser766, and Ser769. Residues 720–755 show a composition bias toward low complexity; the sequence is SPLQRTSSGSSSSSSTPSSQPSSQGGSQPGSQAGSS. 2 stretches are compositionally biased toward basic and acidic residues: residues 775-789 and 814-827; these read EPAKVKPEESRDITR and LRIEETNRPMKKVT. The segment covering 834 to 847 has biased composition (acidic residues); the sequence is EESESSEEEEEDGE. Basic and acidic residues predominate over residues 908-917; it reads TSGEKKRSGH. Ser959 carries the post-translational modification Phosphoserine. Acidic residues predominate over residues 987–996; it reads TDEDEEDEES. In terms of domain architecture, CNH spans 1047–1334; sequence NSEILCAALW…KFLCERNDKV (288 aa).

This sequence belongs to the protein kinase superfamily. STE Ser/Thr protein kinase family. STE20 subfamily. As to quaternary structure, interacts (via the CNH domain) with RAP2A (GTP-bound form preferentially); the interaction is direct and required for the activation of TNIK by RAP2A. Interacts with NEDD4; recruits RAP2A to NEDD4. Interacts with TRAF2 and NCK. Interacts with TCF7L2/TCF4 and CTNNB1; the interaction is direct. Interacts with TANC1. Post-translationally, autophosphorylated. Autophosphorylation is activated by RAP2A and induces association to the cytoskeletal fraction. As to expression, expressed ubiquitously. Highest levels observed in heart, brain and skeletal muscle. Expressed in normal colonic epithelia and colorectal cancer tissues.

The protein localises to the nucleus. The protein resides in the cytoplasm. Its subcellular location is the recycling endosome. It is found in the cytoskeleton. The catalysed reaction is L-seryl-[protein] + ATP = O-phospho-L-seryl-[protein] + ADP + H(+). It catalyses the reaction L-threonyl-[protein] + ATP = O-phospho-L-threonyl-[protein] + ADP + H(+). In terms of biological role, serine/threonine kinase that acts as an essential activator of the Wnt signaling pathway. Recruited to promoters of Wnt target genes and required to activate their expression. May act by phosphorylating TCF4/TCF7L2. Appears to act upstream of the JUN N-terminal pathway. May play a role in the response to environmental stress. Part of a signaling complex composed of NEDD4, RAP2A and TNIK which regulates neuronal dendrite extension and arborization during development. More generally, it may play a role in cytoskeletal rearrangements and regulate cell spreading. Phosphorylates SMAD1 on Thr-322. Activator of the Hippo signaling pathway which plays a pivotal role in organ size control and tumor suppression by restricting proliferation and promoting apoptosis. MAP4Ks act in parallel to and are partially redundant with STK3/MST2 and STK4/MST2 in the phosphorylation and activation of LATS1/2, and establish MAP4Ks as components of the expanded Hippo pathway. This chain is TRAF2 and NCK-interacting protein kinase, found in Homo sapiens (Human).